The chain runs to 521 residues: Glucomannan 4-beta-mannosyltransferase 1 (521 aa).

A helical transmembrane segment spans residues 22 to 42 (VIVPLLRLAVAVCLTMSVLLF). Asp-123 is an active-site residue. The substrate site is built by Asp-182 and Asp-184. Residue Asp-276 is part of the active site. The next 4 membrane-spanning stretches (helical) occupy residues 355-375 (IIAHIVTFAFYCLIIPATIFV), 391-411 (IITLLNSVGTPRSFHLLFFWI), 471-491 (VTELGVAAFLFSCGWYDLAFG), and 495-515 (FFIYLFFQGAAFFIVGIGYVG).

This sequence belongs to the glycosyltransferase 2 family. Plant cellulose synthase-like A subfamily.

It is found in the golgi apparatus membrane. The catalysed reaction is GDP-mannose + (glucomannan)n = GDP + (glucomannan)n+1.. Its function is as follows. Possesses glucomannan synthase and mannan synthase activities in vitro. Mannan synthase consists of a 4-beta-mannosyltransferase activity on mannan using GDP-mannose. The beta-1,4-mannan product is the backbone for galactomannan synthesis by galactomannan galactosyltransferase. Galactomannan is a noncellulosic polysaccharides of plant cell wall. This Oryza sativa subsp. japonica (Rice) protein is Glucomannan 4-beta-mannosyltransferase 1.